The sequence spans 508 residues: Aspartyl/glutamyl-tRNA(Asn/Gln) amidotransferase subunit B (508 aa).

The protein belongs to the GatB/GatE family. GatB subfamily. Heterotrimer of A, B and C subunits.

The enzyme catalyses L-glutamyl-tRNA(Gln) + L-glutamine + ATP + H2O = L-glutaminyl-tRNA(Gln) + L-glutamate + ADP + phosphate + H(+). It catalyses the reaction L-aspartyl-tRNA(Asn) + L-glutamine + ATP + H2O = L-asparaginyl-tRNA(Asn) + L-glutamate + ADP + phosphate + 2 H(+). Allows the formation of correctly charged Asn-tRNA(Asn) or Gln-tRNA(Gln) through the transamidation of misacylated Asp-tRNA(Asn) or Glu-tRNA(Gln) in organisms which lack either or both of asparaginyl-tRNA or glutaminyl-tRNA synthetases. The reaction takes place in the presence of glutamine and ATP through an activated phospho-Asp-tRNA(Asn) or phospho-Glu-tRNA(Gln). The protein is Aspartyl/glutamyl-tRNA(Asn/Gln) amidotransferase subunit B of Salinibacter ruber (strain DSM 13855 / M31).